The sequence spans 110 residues: uncharacterized protein (110 aa).

This is an uncharacterized protein from Saccharomyces cerevisiae (strain ATCC 204508 / S288c) (Baker's yeast).